We begin with the raw amino-acid sequence, 67 residues long: Phycobilisome 7.8 kDa linker polypeptide, allophycocyanin-associated, core (67 aa).

The region spanning M1–A56 is the CpcD-like domain.

The protein belongs to the phycobilisome linker protein family.

It is found in the cellular thylakoid membrane. In terms of biological role, rod linker protein, associated with allophycocyanin. Linker polypeptides determine the state of aggregation and the location of the disk-shaped phycobiliprotein units within the phycobilisome and modulate their spectroscopic properties in order to mediate a directed and optimal energy transfer. This chain is Phycobilisome 7.8 kDa linker polypeptide, allophycocyanin-associated, core (apcC), found in Synechocystis sp. (strain PCC 6714) (Aphanocapsa sp. (strain PCC 6714)).